The primary structure comprises 484 residues: Secreted RxLR effector protein 104 (484 aa).

Positions 1 to 24 (MRSAYPVLTALLVVASSQIAAGSG) are cleaved as a signal peptide. The RxLR-dEER motif lies at 48 to 65 (RFLRGSRDVHNNVANEER). N-linked (GlcNAc...) asparagine glycosylation is present at Asn175. The tract at residues 324-463 (ENPKGQSPYP…SSSVLTPEDV (140 aa)) is disordered. A compositionally biased stretch (polar residues) spans 327–346 (KGQSPYPSTPLTAASTSKGG). Residues 402-413 (SSSSGPSRAFAP) are compositionally biased toward low complexity. Over residues 418 to 428 (DQTFITENSRL) the composition is skewed to polar residues.

Belongs to the RxLR effector family.

It localises to the secreted. It is found in the host nucleus. Functionally, secreted effector that completely suppresses the host cell death induced by cell death-inducing proteins. The protein is Secreted RxLR effector protein 104 of Plasmopara viticola (Downy mildew of grapevine).